We begin with the raw amino-acid sequence, 211 residues long: Ferritin heavy chain (211 aa).

An N-terminal signal peptide occupies residues 1-20 (MKAVLFAVAALLAVCIPISA). One can recognise a Ferritin-like diiron domain in the interval 35-191 (ITMQQSCRGS…GKASTLKKML (157 aa)). The cysteines at positions 41 and 150 are disulfide-linked. Positions 52, 87, 90, 136, and 173 each coordinate Fe cation.

This sequence belongs to the ferritin family. In terms of assembly, oligomer of 12 light (L) chains and 12 heavy (H) chains; L and H chains are disulfide-linked. The functional molecule forms a roughly spherical shell with a diameter of 12 nm and contains a central cavity into which the insoluble ferric iron core is deposited.

The protein resides in the golgi apparatus. The protein localises to the secreted. The catalysed reaction is 4 Fe(2+) + O2 + 4 H(+) = 4 Fe(3+) + 2 H2O. Stores iron in a soluble, non-toxic, readily available form. Important for iron homeostasis. Iron is taken up in the ferrous form and deposited as ferric hydroxides after oxidation. Ferritin is composed of a heavy (H) chain which is responsible for the oxidation and uptake of ferrous iron, and a light (L) chain which facilitates the nucleation of the ferrihydrite iron core. This chain is Ferritin heavy chain, found in Papilio xuthus (Asian swallowtail butterfly).